A 302-amino-acid chain; its full sequence is Alpha-N-acetyl-neuraminyl-2,3-beta-galactosyl-1,3-N-acetyl-galactosaminide alpha-2,6-sialyltransferase (302 aa).

At 1-6 (MKAPGR) the chain is on the cytoplasmic side. Residues 7–27 (LVLIILCSVVFSAVYILLCCW) form a helical; Signal-anchor for type II membrane protein membrane-spanning segment. At 28–302 (AGLPLCLATC…VFAHPSWRTE (275 aa)) the chain is on the lumenal side. Cysteine 76 and cysteine 225 are disulfide-bonded. Asparagine 135 carries N-linked (GlcNAc...) asparagine glycosylation.

The protein belongs to the glycosyltransferase 29 family. In terms of tissue distribution, ubiquitous.

The protein resides in the golgi apparatus membrane. The catalysed reaction is an alpha-Neu5Ac-(2-&gt;3)-beta-D-Gal-(1-&gt;3)-D-GlcNAc derivative + CMP-N-acetyl-beta-neuraminate = an alpha-Neu5Ac-(2-&gt;3)-beta-D-Gal-(1-&gt;3)-[alpha-Neu5Ac-(2-&gt;6)]-D-GlcNAc derivative + CMP + H(+). The enzyme catalyses N-acetyl-alpha-neuraminosyl-(2-&gt;3)-beta-D-galactosyl-(1-&gt;3)-N-acetyl-D-galactosamine + CMP-N-acetyl-beta-neuraminate = N-acetyl-alpha-neuraminosyl-(2-&gt;3)-beta-D-galactosyl-(1-&gt;3)-[N-acetyl-alpha-neuraminosyl-(2-&gt;6)]-N-acetyl-D-galactosamine + CMP + H(+). It catalyses the reaction a ganglioside GM1b (d18:1(4E)) + CMP-N-acetyl-beta-neuraminate = a ganglioside GD1alpha (d18:1(4E)) + CMP + H(+). It carries out the reaction 3-O-[alpha-Neu5Ac-(2-&gt;3)-beta-D-Gal-(1-&gt;3)-alpha-D-GalNAc]-L-Ser-[protein] + CMP-N-acetyl-beta-neuraminate = a 3-O-{alpha-Neu5Ac-(2-&gt;3)-beta-D-Gal-(1-&gt;3)-[alpha-Neu5Ac-(2-&gt;6)]-alpha-D-GalNAc}-L-seryl-[protein] + CMP + H(+). The catalysed reaction is 3-O-[alpha-Neu5Ac-(2-&gt;3)-beta-D-Gal-(1-&gt;3)-alpha-D-GalNAc]-L-Thr-[protein] + CMP-N-acetyl-beta-neuraminate = a 3-O-{alpha-Neu5Ac-(2-&gt;3)-beta-D-Gal-(1-&gt;3)-[alpha-Neu5Ac-(2-&gt;6)]-alpha-D-GalNAc}-L-threonyl-[protein] + CMP + H(+). The protein operates within protein modification; protein glycosylation. It participates in glycolipid biosynthesis. In terms of biological role, transfers the sialyl group (N-acetyl-alpha-neuraminyl or NeuAc) from CMP-NeuAc to the GalNAc residue on the NeuAc-alpha-2,3-Gal-beta-1,3-GalNAc sequence of glycoproteins and glycolipids forming an alpha-2,6-linkage. Produces branched type disialyl structures by transfer of a sialyl group onto a GalNAc residue inside the backbone core chains. Prefers O-glycans to glycoproteins or glycolipids. The chain is Alpha-N-acetyl-neuraminyl-2,3-beta-galactosyl-1,3-N-acetyl-galactosaminide alpha-2,6-sialyltransferase (ST6GALNAC4) from Homo sapiens (Human).